We begin with the raw amino-acid sequence, 75 residues long: Phytosulfokines 3 (75 aa).

The N-terminal stretch at 1 to 22 (MSPKVIAICLVALLLPISISHG) is a signal peptide. Residues 23-66 (GRIGPIEPSKASSKVVERGNYDGRVEGCEEDDCLVERLLVAHLD) constitute a propeptide that is removed on maturation. 2 positions are modified to sulfotyrosine: Y67 and Y69. Residues 72–75 (GKHN) constitute a propeptide that is removed on maturation.

The protein belongs to the phytosulfokine family. Post-translationally, sulfation is important for activity and for the binding to a putative membrane receptor. In terms of processing, PSK-alpha is produced by endopeptidase digestion. PSK-beta is produced from PSK-alpha by exopeptidase digestion.

It localises to the secreted. In terms of biological role, promotes plant cell differentiation, organogenesis and somatic embryogenesis as well as cell proliferation. The chain is Phytosulfokines 3 (PSK3) from Oryza sativa subsp. japonica (Rice).